Consider the following 500-residue polypeptide: E3 ubiquitin-protein ligase TRIM4 (500 aa).

The RING-type zinc-finger motif lies at 12–53 (CPICLDYFQDPVSIECGHNFCRGCLHRNWAPGGGPFPCPECR). The B box-type zinc finger occupies 82 to 123 (VPPGLCGRHWEPLRLFCEDDQRPVCLVCRESQEHQTHAMAPI). Zn(2+) is bound by residues Cys87, His90, Cys109, and His115. Positions 212 to 253 (EEEDLFLQRLNKEEEETKKKLNENTLKLNQTIASLKKLILEV) form a coiled coil. The B30.2/SPRY domain maps to 288–500 (KVKTVCQIPL…LVIPPVTDRK (213 aa)).

It belongs to the TRIM/RBCC family. As to quaternary structure, homotrimer.

The protein resides in the cytoplasm. It carries out the reaction S-ubiquitinyl-[E2 ubiquitin-conjugating enzyme]-L-cysteine + [acceptor protein]-L-lysine = [E2 ubiquitin-conjugating enzyme]-L-cysteine + N(6)-ubiquitinyl-[acceptor protein]-L-lysine.. The protein operates within protein modification; protein ubiquitination. Its function is as follows. E3 ubiquitin-protein ligase. Mediates 'Lys-63'-linked polyubiquitination of the innate immune receptor RIGI, this linkage doesn't lead to proteasomal degradation but seems to enhance IFN induction. This Homo sapiens (Human) protein is E3 ubiquitin-protein ligase TRIM4 (TRIM4).